Consider the following 651-residue polypeptide: Polyadenylate-binding protein 1 (651 aa).

Over residues 1 to 27 (MSSTESPVPAAAAPAEAVPASTPAPAA) the composition is skewed to low complexity. Residues 1–42 (MSSTESPVPAAAAPAEAVPASTPAPAAEQPAVGNGEQRNNAD) are disordered. 4 consecutive RRM domains span residues 47–125 (TSLY…WSQR), 135–211 (GNIF…HHIP), 227–304 (TNVY…RAQK), and 330–407 (VNLY…LAQR). Disordered regions lie at residues 481–554 (QPGQ…EADQ) and 632–651 (QNDS…KTEA). Residues 529-540 (AGQPVPGQPMPR) are compositionally biased toward pro residues. Positions 555–632 (PGALTAAALA…ALEVLKEYQQ (78 aa)) constitute a PABC domain. Low complexity predominate over residues 636-651 (AGAEAEANAEAPKTEA).

Belongs to the polyadenylate-binding protein type-1 family. In terms of assembly, part of large ribonucleoprotein complexes (mRNPs) containing RNA-binding proteins RRM4 and PAB1, endosome-binding protein UPA1, core scaffold protein UPA2 and associated factor GRP1. Interacts (via PABC domain) with UPA1 (via PAM2 domain). Interacts (via PABC domain) with UPA2 (via PAM2 domains).

It localises to the cytoplasm. The protein resides in the cytoskeleton. Its subcellular location is the endosome. Functionally, RNA-binding protein involved in the formation of polar-growing hyphae which is essential for infection by the plant pathogen. Component of endosomal mRNA transport that regulates polarity of the infectious hyphae by transporting a broad spectrum of cargo mRNAs from the nucleus to cell poles. In Mycosarcoma maydis (Corn smut fungus), this protein is Polyadenylate-binding protein 1.